The chain runs to 318 residues: Ribokinase (318 aa).

Residues 12–14 (NWD), 40–44 (GKAAN), and glutamate 141 contribute to the substrate site. ATP is bound by residues asparagine 188 and 235–240 (TLGGNG). The K(+) site is built by aspartate 264 and serine 266. Residue 269 to 270 (GD) participates in ATP binding. Aspartate 270 serves as a coordination point for substrate. Aspartate 270 functions as the Proton acceptor in the catalytic mechanism. Residues serine 301, arginine 304, glycine 306, and serine 310 each coordinate K(+).

The protein belongs to the carbohydrate kinase PfkB family. Ribokinase subfamily. In terms of assembly, homodimer. Requires Mg(2+) as cofactor.

The protein resides in the cytoplasm. It localises to the nucleus. It carries out the reaction D-ribose + ATP = D-ribose 5-phosphate + ADP + H(+). Its pathway is carbohydrate metabolism; D-ribose degradation; D-ribose 5-phosphate from beta-D-ribopyranose: step 2/2. Its activity is regulated as follows. Activated by a monovalent cation that binds near, but not in, the active site. The most likely occupant of the site in vivo is potassium. Ion binding induces a conformational change that may alter substrate affinity. Catalyzes the phosphorylation of ribose at O-5 in a reaction requiring ATP and magnesium. The resulting D-ribose-5-phosphate can then be used either for sythesis of nucleotides, histidine, and tryptophan, or as a component of the pentose phosphate pathway. In Dictyostelium discoideum (Social amoeba), this protein is Ribokinase (rbsk).